The sequence spans 165 residues: Large ribosomal subunit protein uL11 (165 aa).

This sequence belongs to the universal ribosomal protein uL11 family. As to quaternary structure, part of the ribosomal stalk of the 50S ribosomal subunit. Interacts with L10 and the large rRNA to form the base of the stalk. L10 forms an elongated spine to which L12 dimers bind in a sequential fashion forming a multimeric L10(L12)X complex.

In terms of biological role, forms part of the ribosomal stalk which helps the ribosome interact with GTP-bound translation factors. The sequence is that of Large ribosomal subunit protein uL11 from Thermococcus kodakarensis (strain ATCC BAA-918 / JCM 12380 / KOD1) (Pyrococcus kodakaraensis (strain KOD1)).